Here is a 201-residue protein sequence, read N- to C-terminus: IMP cyclohydrolase (201 aa).

Belongs to the archaeal IMP cyclohydrolase family.

The catalysed reaction is IMP + H2O = 5-formamido-1-(5-phospho-D-ribosyl)imidazole-4-carboxamide. Its pathway is purine metabolism; IMP biosynthesis via de novo pathway; IMP from 5-formamido-1-(5-phospho-D-ribosyl)imidazole-4-carboxamide: step 1/1. In terms of biological role, catalyzes the cyclization of 5-formylamidoimidazole-4-carboxamide ribonucleotide to IMP. The polypeptide is IMP cyclohydrolase (Methanococcus maripaludis (strain C7 / ATCC BAA-1331)).